A 166-amino-acid polypeptide reads, in one-letter code: 3-dehydroquinate dehydratase (166 aa).

Catalysis depends on tyrosine 22, which acts as the Proton acceptor. Substrate is bound by residues asparagine 73, histidine 79, and aspartate 86. The active-site Proton donor is the histidine 99. Substrate is bound by residues 100–101 (IT) and arginine 110.

It belongs to the type-II 3-dehydroquinase family. Homododecamer.

It carries out the reaction 3-dehydroquinate = 3-dehydroshikimate + H2O. The protein operates within metabolic intermediate biosynthesis; chorismate biosynthesis; chorismate from D-erythrose 4-phosphate and phosphoenolpyruvate: step 3/7. Catalyzes a trans-dehydration via an enolate intermediate. The protein is 3-dehydroquinate dehydratase of Wolinella succinogenes (strain ATCC 29543 / DSM 1740 / CCUG 13145 / JCM 31913 / LMG 7466 / NCTC 11488 / FDC 602W) (Vibrio succinogenes).